A 277-amino-acid chain; its full sequence is Phycobilisome rod-core linker polypeptide CpcG1 (277 aa).

The region spanning 11–189 is the PBS-linker domain; it reads RTLDQRVVSY…YWRNKEISLS (179 aa).

Belongs to the phycobilisome linker protein family. The phycobilisome is a hemidiscoidal structure that is composed of two distinct substructures: a core complex and a number of rods radiating from the core.

The protein localises to the cellular thylakoid membrane. Its function is as follows. Rod-core linker protein required for attachment of phycocyanin to allophycocyanin in cores of phycobilisomes. In terms of biological role, linker polypeptides determine the state of aggregation and the location of the disk-shaped phycobiliprotein units within the phycobilisome and modulate their spectroscopic properties in order to mediate a directed and optimal energy transfer. This Thermosynechococcus vestitus (strain NIES-2133 / IAM M-273 / BP-1) protein is Phycobilisome rod-core linker polypeptide CpcG1 (cpcG1).